We begin with the raw amino-acid sequence, 384 residues long: MSEQLVTPENVTTKDGKINLLDLNRQQMREFFKDLGEKPFRADQVMKWMYHYCCDNFDEMTDINKVLRGKLKEVAEIRAPEVVEEQRSSDGTIKWAIAVGDQRVETVYIPEDDRATLCVSSQVGCALECKFCSTAQQGFNRNLRVSEIIGQVWRAAKIVGAAKVTGQRPITNVVMMGMGEPLLNLNNVVPAMEIMLDDFGFGLSKRRVTLSTSGVVPALDKLGDMIDVALAISLHAPNDEIRDEIVPINKKYNIETFLAAVRRYLEKSNANQGRVTIEYVMLDHVNDGTEHAHQLAELLKDTPCKINLIPWNPFPGAPYGRSSNSRIDRFSKVLMSYGFTTIVRKTRGDDIDAACGQLAGDVIDRTKRTLRKRMQGEAIDIKAV.

The active-site Proton acceptor is Glu-105. The region spanning 111–350 (EDDRATLCVS…TIVRKTRGDD (240 aa)) is the Radical SAM core domain. Cys-118 and Cys-355 are joined by a disulfide. Residues Cys-125, Cys-129, and Cys-132 each contribute to the [4Fe-4S] cluster site. Residues 179–180 (GE), Ser-211, 233–235 (SLH), and Asn-312 each bind S-adenosyl-L-methionine. The active-site S-methylcysteine intermediate is the Cys-355.

It belongs to the radical SAM superfamily. RlmN family. [4Fe-4S] cluster serves as cofactor.

It is found in the cytoplasm. It carries out the reaction adenosine(2503) in 23S rRNA + 2 reduced [2Fe-2S]-[ferredoxin] + 2 S-adenosyl-L-methionine = 2-methyladenosine(2503) in 23S rRNA + 5'-deoxyadenosine + L-methionine + 2 oxidized [2Fe-2S]-[ferredoxin] + S-adenosyl-L-homocysteine. It catalyses the reaction adenosine(37) in tRNA + 2 reduced [2Fe-2S]-[ferredoxin] + 2 S-adenosyl-L-methionine = 2-methyladenosine(37) in tRNA + 5'-deoxyadenosine + L-methionine + 2 oxidized [2Fe-2S]-[ferredoxin] + S-adenosyl-L-homocysteine. Its function is as follows. Specifically methylates position 2 of adenine 2503 in 23S rRNA and position 2 of adenine 37 in tRNAs. m2A2503 modification seems to play a crucial role in the proofreading step occurring at the peptidyl transferase center and thus would serve to optimize ribosomal fidelity. This chain is Dual-specificity RNA methyltransferase RlmN, found in Shigella boydii serotype 18 (strain CDC 3083-94 / BS512).